Consider the following 354-residue polypeptide: MNGTEGPYFYIPMVNTTGIVRSPYDYPQYYLVNPAAYAALGAYMFFLILVGFPINFLTLYVTIEHKKLRTPLNYILLNLAVANLFMVFGGFTTTMYTSMHGYFVLGRLGCNLEGFFATLGGEIALWSLVVLAVERWMVVCKPISNFRFGENHAIMGLAMTWLMASACAVPPLVGWSRYIPEGMQCSCGVDYYTRAEGFNNESFVVYMFCCHFMIPLIIVFFCYGRLLCAVKEAAAAQQESETTQRAEREVTRMVVIMVIAFLVCWLPYASVAWWIFTHQGSEFGPVFMTIPAFFAKSSSIYNPMIYICMNKQFRNCMITTLCCGKNPFEEEEGASSTASKTEASSVSSSSVSPA.

The Extracellular portion of the chain corresponds to methionine 1 to alanine 36. Asparagine 2 and asparagine 15 each carry an N-linked (GlcNAc...) asparagine glycan. The helical transmembrane segment at tyrosine 37–valine 61 threads the bilayer. Topologically, residues threonine 62–asparagine 73 are cytoplasmic. The helical transmembrane segment at tyrosine 74 to tyrosine 96 threads the bilayer. Residues threonine 97–cysteine 110 are Extracellular-facing. Cysteine 110 and cysteine 187 are joined by a disulfide. A helical membrane pass occupies residues asparagine 111 to valine 133. A 'Ionic lock' involved in activated form stabilization motif is present at residues glutamate 134–tryptophan 136. The Cytoplasmic segment spans residues glutamate 134–histidine 152. A helical transmembrane segment spans residues alanine 153–valine 173. At glycine 174–serine 202 the chain is on the extracellular side. N-linked (GlcNAc...) asparagine glycosylation occurs at asparagine 200. Residues phenylalanine 203–glycine 224 traverse the membrane as a helical segment. Topologically, residues arginine 225–arginine 252 are cytoplasmic. A helical membrane pass occupies residues methionine 253 to tryptophan 274. At isoleucine 275–valine 286 the chain is on the extracellular side. The helical transmembrane segment at phenylalanine 287–cysteine 308 threads the bilayer. Lysine 296 bears the N6-(retinylidene)lysine mark. At methionine 309–alanine 354 the chain is on the cytoplasmic side. 2 S-palmitoyl cysteine lipidation sites follow: cysteine 322 and cysteine 323. The segment at glutamate 329–alanine 354 is disordered. A compositionally biased stretch (low complexity) spans alanine 334–alanine 354.

The protein belongs to the G-protein coupled receptor 1 family. Opsin subfamily. In terms of processing, phosphorylated on some or all of the serine and threonine residues present in the C-terminal region. Post-translationally, contains one covalently linked retinal chromophore.

The protein resides in the membrane. The protein localises to the cell projection. It is found in the cilium. Its subcellular location is the photoreceptor outer segment. Functionally, photoreceptor required for image-forming vision at low light intensity. While most salt water fish species use retinal as chromophore, most freshwater fish use 3-dehydroretinal, or a mixture of retinal and 3-dehydroretinal. Light-induced isomerization of 11-cis to all-trans retinal triggers a conformational change that activates signaling via G-proteins. Subsequent receptor phosphorylation mediates displacement of the bound G-protein alpha subunit by arrestin and terminates signaling. This is Rhodopsin (rho) from Mullus surmuletus (Striped red mullet).